The primary structure comprises 310 residues: Urease accessory protein UreD (310 aa).

It belongs to the UreD family. As to quaternary structure, ureD, UreF and UreG form a complex that acts as a GTP-hydrolysis-dependent molecular chaperone, activating the urease apoprotein by helping to assemble the nickel containing metallocenter of UreC. The UreE protein probably delivers the nickel.

It is found in the cytoplasm. Its function is as follows. Required for maturation of urease via the functional incorporation of the urease nickel metallocenter. The polypeptide is Urease accessory protein UreD (Synechococcus sp. (strain RCC307)).